A 246-amino-acid polypeptide reads, in one-letter code: Eukaryotic translation initiation factor 6 (246 aa).

A phosphoserine; by CK1 mark is found at S174 and S175.

It belongs to the eIF-6 family. Monomer. Associates with the 60S ribosomal subunit. Post-translationally, phosphorylation at Ser-174 and Ser-175 promotes nuclear export.

Its subcellular location is the cytoplasm. The protein localises to the nucleus. It is found in the nucleolus. Its function is as follows. Binds to the 60S ribosomal subunit and prevents its association with the 40S ribosomal subunit to form the 80S initiation complex in the cytoplasm. Is also involved in ribosome biogenesis. Associates with pre-60S subunits in the nucleus and is involved in its nuclear export. This Sordaria macrospora (strain ATCC MYA-333 / DSM 997 / K(L3346) / K-hell) protein is Eukaryotic translation initiation factor 6.